A 292-amino-acid polypeptide reads, in one-letter code: Putative OX-2 membrane glycoprotein homolog (292 aa).

An N-terminal signal peptide occupies residues 1 to 18 (MSPLMLRLLPLLCIIISA). The 113-residue stretch at 24-136 (PETSPSLVYE…TFTVDNEKTS (113 aa)) folds into the Ig-like V-type domain. A disulfide bridge connects residues Cys42 and Cys126. Asn45, Asn57, Asn72, and Asn195 each carry an N-linked (GlcNAc...) asparagine; by host glycan. Residues 147–237 (PIVVLYFRYL…TNQKASALVT (91 aa)) form the Ig-like C2-type domain. A helical transmembrane segment spans residues 263–283 (VFTWIVPLILILIISVMVLLI).

The protein resides in the host membrane. The protein is Putative OX-2 membrane glycoprotein homolog (U85) of Human herpesvirus 6B (strain Z29) (HHV-6 variant B).